Consider the following 594-residue polypeptide: Probable translation initiation factor IF-2 (594 aa).

The region spanning 5-224 (YRAPIVVVVG…LMAGLTQRLV (220 aa)) is the tr-type G domain. The interval 14 to 21 (GHVDVGKT) is G1. 14-21 (GHVDVGKT) lines the GTP pocket. The tract at residues 39 to 43 (MITQH) is G2. Positions 80 to 83 (DTPG) are G3. GTP-binding positions include 80 to 84 (DTPGH) and 134 to 137 (NKVD). Positions 134–137 (NKVD) are G4. The G5 stretch occupies residues 202 to 204 (SAV).

This sequence belongs to the TRAFAC class translation factor GTPase superfamily. Classic translation factor GTPase family. IF-2 subfamily.

Its function is as follows. Function in general translation initiation by promoting the binding of the formylmethionine-tRNA to ribosomes. Seems to function along with eIF-2. The polypeptide is Probable translation initiation factor IF-2 (Caldivirga maquilingensis (strain ATCC 700844 / DSM 13496 / JCM 10307 / IC-167)).